The following is a 497-amino-acid chain: Vacuolar fusion protein CCZ1 homolog B (497 aa).

Residues 244-284 (GTSSWSYLRKGSGSPQISSRSTTVPPLGSGGTLPSGNGSST) are disordered.

It belongs to the CCZ1 family. As to quaternary structure, interacts with MON1.

Its subcellular location is the endosome. It is found in the prevacuolar compartment. Its function is as follows. Plays an important role in membrane trafficking through the secretory apparatus. In complex with MON1, acts as a guanine exchange factor (GEF) for RABG3F of the RAB7 protein family. Promotes the exchange of GDP to GTP, converting RABG3F from an inactive GDP-bound form into an active GTP-bound form. The RABG3F active form is involved in protein trafficking from prevacuolar compartments (PVCs) to vacuoles. May serve as a linker between Rab5 and Rab7 protein families in PVCs and mediate PVC maturation. The polypeptide is Vacuolar fusion protein CCZ1 homolog B (Arabidopsis thaliana (Mouse-ear cress)).